We begin with the raw amino-acid sequence, 203 residues long: Small ribosomal subunit protein uS10m (203 aa).

A mitochondrion-targeting transit peptide spans 1–14 (MLRNTIALRSFIRT). Phosphoserine is present on serine 193.

The protein belongs to the universal ribosomal protein uS10 family. In terms of assembly, component of the mitochondrial small ribosomal subunit (mt-SSU). Mature yeast 74S mitochondrial ribosomes consist of a small (37S) and a large (54S) subunit. The 37S small subunit contains a 15S ribosomal RNA (15S mt-rRNA) and 34 different proteins. The 54S large subunit contains a 21S rRNA (21S mt-rRNA) and 46 different proteins.

Its subcellular location is the mitochondrion. Functionally, component of the mitochondrial ribosome (mitoribosome), a dedicated translation machinery responsible for the synthesis of mitochondrial genome-encoded proteins, including at least some of the essential transmembrane subunits of the mitochondrial respiratory chain. The mitoribosomes are attached to the mitochondrial inner membrane and translation products are cotranslationally integrated into the membrane. The sequence is that of Small ribosomal subunit protein uS10m (RSM10) from Saccharomyces cerevisiae (strain ATCC 204508 / S288c) (Baker's yeast).